The sequence spans 395 residues: Multidrug resistance protein MdtL (395 aa).

The next 12 membrane-spanning stretches (helical) occupy residues 4–24 (FLLC…MYLV), 42–62 (IAFS…GKIA), 69–89 (PVAI…SRAS), 93–113 (LFLS…VVAF), 131–151 (LLNG…HLIM), 158–178 (SLFY…LFIL), 217–237 (VSVI…VMGF), 247–267 (ALTA…LGLF), 271–291 (TLML…SLAH), 295–315 (VTLF…GVAM), 328–350 (VASS…LAAI), and 355–377 (AMNM…IFSV).

It belongs to the major facilitator superfamily. DHA1 family. MdtL (TC 2.A.1.2.22) subfamily.

The protein localises to the cell inner membrane. The chain is Multidrug resistance protein MdtL from Salmonella dublin (strain CT_02021853).